The chain runs to 67 residues: Protein AaeX (67 aa).

2 helical membrane passes run 3 to 23 (LFPV…ELLL) and 43 to 63 (FVWH…YLIS).

Belongs to the AaeX family.

Its subcellular location is the cell membrane. This Salmonella agona (strain SL483) protein is Protein AaeX.